Consider the following 435-residue polypeptide: tRNA modification GTPase MnmE (435 aa).

The (6S)-5-formyl-5,6,7,8-tetrahydrofolate site is built by arginine 20, glutamate 77, and lysine 117. One can recognise a TrmE-type G domain in the interval 214 to 359 (GFKIVIVGAP…FMKELESFCL (146 aa)). GTP is bound by residues 224–229 (NSGKSS), 243–249 (TEEAGTT), and 268–271 (DTAG). Mg(2+) is bound by residues serine 228 and threonine 249. Lysine 435 is a binding site for (6S)-5-formyl-5,6,7,8-tetrahydrofolate.

The protein belongs to the TRAFAC class TrmE-Era-EngA-EngB-Septin-like GTPase superfamily. TrmE GTPase family. Homodimer. Heterotetramer of two MnmE and two MnmG subunits. K(+) is required as a cofactor.

The protein resides in the cytoplasm. Functionally, exhibits a very high intrinsic GTPase hydrolysis rate. Involved in the addition of a carboxymethylaminomethyl (cmnm) group at the wobble position (U34) of certain tRNAs, forming tRNA-cmnm(5)s(2)U34. This Bartonella henselae (strain ATCC 49882 / DSM 28221 / CCUG 30454 / Houston 1) (Rochalimaea henselae) protein is tRNA modification GTPase MnmE.